The primary structure comprises 702 residues: Polyribonucleotide nucleotidyltransferase (702 aa).

The Mg(2+) site is built by Asp487 and Asp493. Residues 554–613 (PRLLTIKIHPDKIREVIGKGGSTIQAITKETGTQIDIQDDGTIVIASVNAIAAQAAKARI) enclose the KH domain. Positions 623–691 (GRIYEGKVAK…KQGRIRLSMK (69 aa)) constitute an S1 motif domain.

Belongs to the polyribonucleotide nucleotidyltransferase family. As to quaternary structure, component of the RNA degradosome, which is a multiprotein complex involved in RNA processing and mRNA degradation. It depends on Mg(2+) as a cofactor.

The protein resides in the cytoplasm. The catalysed reaction is RNA(n+1) + phosphate = RNA(n) + a ribonucleoside 5'-diphosphate. In terms of biological role, involved in mRNA degradation. Catalyzes the phosphorolysis of single-stranded polyribonucleotides processively in the 3'- to 5'-direction. The sequence is that of Polyribonucleotide nucleotidyltransferase from Stenotrophomonas maltophilia (strain K279a).